The sequence spans 407 residues: MEIILGVVMFTLIVLALTVMILFAKSKLVNTGDITVEINEDEDKSFTAPAGDKLLNMLSSHGIFVSSACGGGGSCGQCRVTIKEGGGDILPTELSHISKREAKEGCRLACQVNVKQNLKIELPEEIFGVKKWTCEVISNDNKATFIKELKLKIPDGDVVPFRAGGFIQIEAEPHTVKYADFDVPTEYRGDWDKFNLFRFESVATEPTVRAYSMANYPEEHGIILLNVRIATPPPSVPDAPPGIMSSYIWSLKPGDKVVISGPFGEFFAKDTDAEMVFIGGGAGMAPMRSHIFDQLKRLHSKRKISFWYGARSRREMFYEEDFDQLQAENDNFRWHVALSDPQPEDNWTGYTGFIHNVLLENYLKDHPAPEDCEFYMCGPPMMNAAVIKMLKDLGVEDENIMLDDFGG.

The helical transmembrane segment at 3-23 threads the bilayer; sequence IILGVVMFTLIVLALTVMILF. Residues 32–126 enclose the 2Fe-2S ferredoxin-type domain; sequence GDITVEINED…NLKIELPEEI (95 aa). Residues C69, C75, C78, and C110 each coordinate [2Fe-2S] cluster. Positions 129 to 269 constitute an FAD-binding FR-type domain; that stretch reads VKKWTCEVIS…SGPFGEFFAK (141 aa).

Belongs to the NqrF family. In terms of assembly, composed of six subunits; NqrA, NqrB, NqrC, NqrD, NqrE and NqrF. Requires [2Fe-2S] cluster as cofactor. FAD serves as cofactor.

Its subcellular location is the cell inner membrane. It catalyses the reaction a ubiquinone + n Na(+)(in) + NADH + H(+) = a ubiquinol + n Na(+)(out) + NAD(+). NQR complex catalyzes the reduction of ubiquinone-1 to ubiquinol by two successive reactions, coupled with the transport of Na(+) ions from the cytoplasm to the periplasm. The first step is catalyzed by NqrF, which accepts electrons from NADH and reduces ubiquinone-1 to ubisemiquinone by a one-electron transfer pathway. The protein is Na(+)-translocating NADH-quinone reductase subunit F of Yersinia pseudotuberculosis serotype I (strain IP32953).